Here is a 1420-residue protein sequence, read N- to C-terminus: DNA-directed RNA polymerase subunit beta' (1420 aa).

Residues C70, C72, C85, and C88 each coordinate Zn(2+). Residues D464, D466, and D468 each coordinate Mg(2+). Residues C823, C897, C904, and C907 each contribute to the Zn(2+) site.

This sequence belongs to the RNA polymerase beta' chain family. As to quaternary structure, the RNAP catalytic core consists of 2 alpha, 1 beta, 1 beta' and 1 omega subunit. When a sigma factor is associated with the core the holoenzyme is formed, which can initiate transcription. It depends on Mg(2+) as a cofactor. Zn(2+) serves as cofactor.

The enzyme catalyses RNA(n) + a ribonucleoside 5'-triphosphate = RNA(n+1) + diphosphate. DNA-dependent RNA polymerase catalyzes the transcription of DNA into RNA using the four ribonucleoside triphosphates as substrates. The polypeptide is DNA-directed RNA polymerase subunit beta' (Polynucleobacter asymbioticus (strain DSM 18221 / CIP 109841 / QLW-P1DMWA-1) (Polynucleobacter necessarius subsp. asymbioticus)).